The chain runs to 325 residues: NADH-quinone oxidoreductase subunit H (325 aa).

8 helical membrane passes run 11 to 31 (ILISVLKAVVILLVVVTCGAF), 81 to 101 (AIFTLAPVIAFTSLLLSFAIV), 114 to 134 (IGILFFLMMAGLAVYAVLFAG), 154 to 174 (LSYEVFLGLSLMGVVAQVGSF), 186 to 206 (VWNVIPQFFGFLTFAIAGVAV), 237 to 257 (FFVGEYIGIVTVSALIVTLFF), 265 to 285 (LPPFIWFALKTAFFMVMFILI), and 304 to 324 (VCLPLTLLNLLATAAVILYNA).

The protein belongs to the complex I subunit 1 family. In terms of assembly, NDH-1 is composed of 13 different subunits. Subunits NuoA, H, J, K, L, M, N constitute the membrane sector of the complex.

The protein resides in the cell inner membrane. It carries out the reaction a quinone + NADH + 5 H(+)(in) = a quinol + NAD(+) + 4 H(+)(out). NDH-1 shuttles electrons from NADH, via FMN and iron-sulfur (Fe-S) centers, to quinones in the respiratory chain. The immediate electron acceptor for the enzyme in this species is believed to be ubiquinone. Couples the redox reaction to proton translocation (for every two electrons transferred, four hydrogen ions are translocated across the cytoplasmic membrane), and thus conserves the redox energy in a proton gradient. This subunit may bind ubiquinone. This is NADH-quinone oxidoreductase subunit H from Yersinia pseudotuberculosis serotype O:3 (strain YPIII).